The chain runs to 398 residues: Subtilisin-like protease CPC735_050320 (398 aa).

Residues 1–19 (MVFLGKILPLALAALSVNG) form the signal peptide. Residues 20–117 (AEILSAPGAE…IERDQIMKAS (98 aa)) constitute a propeptide that is removed on maturation. The Inhibitor I9 domain occupies 35–115 (YIVVMKEGTS…AYIERDQIMK (81 aa)). Residues 127–398 (SWGLARVSSR…NRLINNGVSQ (272 aa)) form the Peptidase S8 domain. Catalysis depends on charge relay system residues Asp-159 and His-190. Residues Asn-220 and Asn-250 are each glycosylated (N-linked (GlcNAc...) asparagine). Ser-344 acts as the Charge relay system in catalysis.

This sequence belongs to the peptidase S8 family.

The protein localises to the secreted. Its function is as follows. Secreted subtilisin-like serine protease with keratinolytic activity that contributes to pathogenicity. This is Subtilisin-like protease CPC735_050320 from Coccidioides posadasii (strain C735) (Valley fever fungus).